Here is a 437-residue protein sequence, read N- to C-terminus: MSMFLDTAKISVQAGRGGDGMVAFRREKYVPNGGPWGGDGGKGGSVIFRVNEGLRTLMDFRYNRKFKAKSGEKGMTKGMHGRGAEDLIVFVPQGTTVRDAETGKVITDLVEHGQEVVIAKGGRGGRGNIRFATPRNPAPEIAENGEPGEERQLELELKILADVGLVGFPSVGKSTLLSVVSSAKPKIGAYHFTTIVPNLGMVRTKSGDSFAMADLPGLIEGASQGVGLGTQFLRHIERTRVILHVIDMSASEGRDPYEDYVSINNELETYNLRLMERPQIIVANKMDMPEAQENLKAFKKKLAAQYDEFDDLPMIFPISSLAHQGLENLLEATAELLAKTDEFLLYDESDLVDEEAYYGFAEAEKEFEITRDDDATWVLSGEKLERLFVMTNMERDESIMKFARQLRGMGVDEALRERGAKDGDLVRIGKFEFEFVD.

The Obg domain maps to 2-160; that stretch reads SMFLDTAKIS…RQLELELKIL (159 aa). Residues 161–338 form the OBG-type G domain; sequence ADVGLVGFPS…LLEATAELLA (178 aa). Residues 167-174, 192-196, 214-217, 284-287, and 319-321 each bind GTP; these read GFPSVGKS, FTTIV, DLPG, NKMD, and SSL. Mg(2+)-binding residues include Ser174 and Thr194. The OCT domain maps to 359–437; the sequence is GFAEAEKEFE…IGKFEFEFVD (79 aa).

It belongs to the TRAFAC class OBG-HflX-like GTPase superfamily. OBG GTPase family. In terms of assembly, monomer. The cofactor is Mg(2+).

The protein localises to the cytoplasm. Functionally, an essential GTPase which binds GTP, GDP and possibly (p)ppGpp with moderate affinity, with high nucleotide exchange rates and a fairly low GTP hydrolysis rate. Plays a role in control of the cell cycle, stress response, ribosome biogenesis and in those bacteria that undergo differentiation, in morphogenesis control. This is GTPase Obg from Streptococcus pyogenes serotype M28 (strain MGAS6180).